A 64-amino-acid chain; its full sequence is Large ribosomal subunit protein bL28 (64 aa).

This sequence belongs to the bacterial ribosomal protein bL28 family.

In Mycoplasmoides gallisepticum (strain R(low / passage 15 / clone 2)) (Mycoplasma gallisepticum), this protein is Large ribosomal subunit protein bL28.